The following is a 188-amino-acid chain: dCTP deaminase (188 aa).

DCTP is bound by residues 111–116 (KSTYAR), 135–137 (TLE), Gln-156, Tyr-170, and Gln-180. Glu-137 (proton donor/acceptor) is an active-site residue.

This sequence belongs to the dCTP deaminase family. As to quaternary structure, homotrimer.

The enzyme catalyses dCTP + H2O + H(+) = dUTP + NH4(+). The protein operates within pyrimidine metabolism; dUMP biosynthesis; dUMP from dCTP (dUTP route): step 1/2. Functionally, catalyzes the deamination of dCTP to dUTP. The polypeptide is dCTP deaminase (Nitrosomonas eutropha (strain DSM 101675 / C91 / Nm57)).